A 422-amino-acid polypeptide reads, in one-letter code: G-protein coupled receptor 151 protein (422 aa).

Residues 1-45 (MGKAMLRAGFADTNSSNMNESFARLHFAGGYLPSDSKDWRTIIPS) lie on the Extracellular side of the membrane. N-linked (GlcNAc...) asparagine glycosylation is found at Asn-14 and Asn-19. The helical transmembrane segment at 46–66 (LLMAVCLVGLVGNLCVIGILL) threads the bilayer. At 67–76 (HGVWKRKPST) the chain is on the cytoplasmic side. Residues 77–97 (IHSLILNLSLADFSLLLFSAP) traverse the membrane as a helical segment. Topologically, residues 98 to 123 (VRAAAYSKGVWDLGWFICKSSDWFTH) are extracellular. The cysteines at positions 115 and 191 are disulfide-linked. Residues 124-144 (VCMAAKSLTFVVVAKACFAYA) traverse the membrane as a helical segment. Over 145–157 (SDPAKQESIHSRT) the chain is Cytoplasmic. A helical transmembrane segment spans residues 158–178 (IWSVLAGIWVVASLLPLPEWL). Topologically, residues 179 to 205 (FSTTRRHAGVEMCLVDVPAVAEEFMSM) are extracellular. The chain crosses the membrane as a helical span at residues 206 to 226 (FGKLYPLLVFCLPLLLAGVYF). The Cytoplasmic portion of the chain corresponds to 227-259 (WRAYDQCKTRCTKTRNLRDQMRSKQLTVMLLST). Residues 260 to 280 (AIISALLWLPEWIAWLWVWHV) form a helical membrane-spanning segment. At 281-290 (KAGGPMPPQG) the chain is on the extracellular side. The helical transmembrane segment at 291 to 311 (FIALSQVLMFFTSTANPLIFL) threads the bilayer. The Cytoplasmic portion of the chain corresponds to 312-422 (VMSEEFKAGL…HEGQETEGCN (111 aa)). Residues 339-422 (VQEAPAGNTE…HEGQETEGCN (84 aa)) are disordered. Residues 366 to 380 (TDGRGSPDDSKEKSG) show a composition bias toward basic and acidic residues.

High expression in the brain and lower levels in kidney and liver. In the nervous system expressed specifically in the habenular area (at protein level).

It localises to the cell membrane. In terms of biological role, proton-sensing G-protein coupled receptor. The protein is G-protein coupled receptor 151 protein (Gpr151) of Mus musculus (Mouse).